The primary structure comprises 350 residues: Anthranilate phosphoribosyltransferase (350 aa).

5-phospho-alpha-D-ribose 1-diphosphate contacts are provided by residues Gly-94, 97–98 (GD), Thr-102, 104–107 (NVST), 122–130 (KHGNRSVSS), and Ser-134. Gly-94 is a binding site for anthranilate. Ser-106 serves as a coordination point for Mg(2+). Position 125 (Asn-125) interacts with anthranilate. Residue Arg-180 coordinates anthranilate. Mg(2+)-binding residues include Asp-239 and Glu-240.

It belongs to the anthranilate phosphoribosyltransferase family. As to quaternary structure, homodimer. The cofactor is Mg(2+).

It catalyses the reaction N-(5-phospho-beta-D-ribosyl)anthranilate + diphosphate = 5-phospho-alpha-D-ribose 1-diphosphate + anthranilate. The protein operates within amino-acid biosynthesis; L-tryptophan biosynthesis; L-tryptophan from chorismate: step 2/5. In terms of biological role, catalyzes the transfer of the phosphoribosyl group of 5-phosphorylribose-1-pyrophosphate (PRPP) to anthranilate to yield N-(5'-phosphoribosyl)-anthranilate (PRA). The polypeptide is Anthranilate phosphoribosyltransferase (Pelobacter propionicus (strain DSM 2379 / NBRC 103807 / OttBd1)).